Consider the following 520-residue polypeptide: Pleckstrin homology domain-containing family A member 8 (520 aa).

The 93-residue stretch at 1-93 folds into the PH domain; sequence MEGVLYKWTN…WLVALGSAKA (93 aa). Thr139 carries the phosphothreonine modification. Residue Ser145 is modified to Phosphoserine. At Thr153 the chain carries Phosphothreonine. A compositionally biased stretch (basic and acidic residues) spans 275–285; sequence GEESLGNHDSD. The segment at 275 to 305 is disordered; sequence GEESLGNHDSDLAQPELHSTSSSPESHWEED. A glycolipid transfer protein homology domain region spans residues 311 to 520; the sequence is TFFSTMNTSF…VHGLESDEVV (210 aa).

Homodimer. Interacts with ARF1; the interaction together with phosphatidylinositol 4-phosphate binding is required for FAPP2 GlcCer transfer ability.

It is found in the cytoplasm. The protein resides in the golgi apparatus. It localises to the trans-Golgi network membrane. Its subcellular location is the membrane. Functionally, cargo transport protein that is required for apical transport from the trans-Golgi network (TGN). Transports AQP2 from the trans-Golgi network (TGN) to sites of AQP2 phosphorylation. Mediates the non-vesicular transport of glucosylceramide (GlcCer) from the trans-Golgi network (TGN) to the plasma membrane and plays a pivotal role in the synthesis of complex glycosphingolipids. Binding of both phosphatidylinositol 4-phosphate (PIP) and ARF1 are essential for the GlcCer transfer ability. Also required for primary cilium formation, possibly by being involved in the transport of raft lipids to the apical membrane, and for membrane tubulation. This chain is Pleckstrin homology domain-containing family A member 8 (PLEKHA8), found in Bos taurus (Bovine).